Here is a 130-residue protein sequence, read N- to C-terminus: Ribosome-binding factor A (130 aa).

The tract at residues 111-130 (RDLDDVGPEATSSDEDAEQR) is disordered.

The protein belongs to the RbfA family. As to quaternary structure, monomer. Binds 30S ribosomal subunits, but not 50S ribosomal subunits or 70S ribosomes.

It is found in the cytoplasm. Functionally, one of several proteins that assist in the late maturation steps of the functional core of the 30S ribosomal subunit. Associates with free 30S ribosomal subunits (but not with 30S subunits that are part of 70S ribosomes or polysomes). Required for efficient processing of 16S rRNA. May interact with the 5'-terminal helix region of 16S rRNA. This chain is Ribosome-binding factor A, found in Xanthomonas axonopodis pv. citri (strain 306).